We begin with the raw amino-acid sequence, 764 residues long: Thyrotropin receptor (764 aa).

Residues 1–20 (MRPADLLQLVLLLDLPRDLG) form the signal peptide. Residues 21–413 (GMGCSSPPCE…EFNPCEDIMG (393 aa)) are Extracellular-facing. C31 and C41 are oxidised to a cystine. Residues N77, N99, and N113 are each glycosylated (N-linked (GlcNAc...) asparagine). LRR repeat units follow at residues 100-124 (LSKVTHIEIRNTRNLTYIDPDALKE), 125-150 (LPLLKFLGIFNTGLKMFPDLTKVYST), 152-174 (IFFILEITDNPYMTSIPVNAFQG), 176-199 (CNETLTLKLYNNGFTSVQGYAFNG), 200-223 (TKLDAVYLNKNKYLTVIDKDAFGG), 227-248 (GPSLLDVSQTSVTALPSKGLEH), and 250-271 (KELIARNTWTLKKLPLSLSFLH). N177 and N198 each carry an N-linked (GlcNAc...) asparagine glycan. An N-linked (GlcNAc...) asparagine glycan is attached at N302. Y385 is modified (sulfotyrosine). Residues 414-441 (YKFLRIVVWFVSLLALLGNVFVLLILLT) traverse the membrane as a helical segment. Over 442–450 (SHYKLNVPR) the chain is Cytoplasmic. Residues 451-473 (FLMCNLAFADFCMGMYLLLIASV) form a helical membrane-spanning segment. Residues 474 to 494 (DLYTHSEYYNHAIDWQTGPGC) are Extracellular-facing. Cysteines 494 and 569 form a disulfide. The helical transmembrane segment at 495–517 (NTAGFFTVFASELSVYTLTVITL) threads the bilayer. The Cytoplasmic portion of the chain corresponds to 518–537 (ERWYAITFAMRLDRKIRLRH). A helical membrane pass occupies residues 538 to 560 (ACAIMVGGWVCCFLLALLPLVGI). At 561 to 580 (SSYAKVSICLPMDTETPLAL) the chain is on the extracellular side. A helical membrane pass occupies residues 581–602 (AYIVFVLTLNIVAFVIVCCCYV). Residues 603-625 (KIYITVRNPQYNPGDKDTKIAKR) are Cytoplasmic-facing. The chain crosses the membrane as a helical span at residues 626–649 (MAVLIFTDFICMAPISFYALSAIL). Over 650–660 (NKPLITVSNSK) the chain is Extracellular. The helical transmembrane segment at 661–682 (ILLVLFYPLNSCANPFLYAIFT) threads the bilayer. The Cytoplasmic segment spans residues 683-764 (KAFQRDVFIL…ISEEYMQTVL (82 aa)). Residues 762–764 (TVL) carry the PDZ-binding motif.

This sequence belongs to the G-protein coupled receptor 1 family. FSH/LSH/TSH subfamily. As to quaternary structure, interacts with heterodimer GPHA2:GPHB5; this interaction stimulates cAMP production. Interacts (via the PDZ-binding motif) with SCRIB; regulates TSHR trafficking and function. Glycosylated. In terms of processing, sulfated. Sulfation on Tyr-385 plays a role in thyrotropin receptor binding and activation. Expressed in thyroide cells (at protein level). Expressed in the thyroid.

Its subcellular location is the cell membrane. The protein localises to the basolateral cell membrane. Functionally, receptor for the thyroid-stimulating hormone (TSH) or thyrotropin. Also acts as a receptor for the heterodimeric glycoprotein hormone (GPHA2:GPHB5) or thyrostimulin. The activity of this receptor is mediated by G proteins which activate adenylate cyclase. Plays a central role in controlling thyroid cell metabolism. This chain is Thyrotropin receptor (TSHR), found in Homo sapiens (Human).